A 237-amino-acid polypeptide reads, in one-letter code: UPF0502 protein HEAR1280 (237 aa).

Polar residues predominate over residues 1 to 13 (MNTEVMHSTSTES). Residues 1–21 (MNTEVMHSTSTESDAQEKPQA) are disordered.

The protein belongs to the UPF0502 family.

The sequence is that of UPF0502 protein HEAR1280 from Herminiimonas arsenicoxydans.